The primary structure comprises 132 residues: T-cell receptor alpha chain V region CTL-F3 (132 aa).

The signal sequence occupies residues 1–22 (MNMRPDTCSVLVLLLMLRRNNG). The interval 23–114 (DSVTQTEGLV…DSALYYCALS (92 aa)) is v segment. A glycan (N-linked (GlcNAc...) asparagine) is linked at N43. A disulfide bridge links C44 with C111. Positions 115 to 132 (NAGAKLTFGGGTRLTVRP) are j segment.

The polypeptide is T-cell receptor alpha chain V region CTL-F3 (Mus musculus (Mouse)).